Reading from the N-terminus, the 250-residue chain is Ubiquinone/menaquinone biosynthesis C-methyltransferase UbiE (250 aa).

Residues S73, D94, and 122–123 (NA) each bind S-adenosyl-L-methionine.

This sequence belongs to the class I-like SAM-binding methyltransferase superfamily. MenG/UbiE family.

The enzyme catalyses a 2-demethylmenaquinol + S-adenosyl-L-methionine = a menaquinol + S-adenosyl-L-homocysteine + H(+). It carries out the reaction a 2-methoxy-6-(all-trans-polyprenyl)benzene-1,4-diol + S-adenosyl-L-methionine = a 5-methoxy-2-methyl-3-(all-trans-polyprenyl)benzene-1,4-diol + S-adenosyl-L-homocysteine + H(+). The protein operates within quinol/quinone metabolism; menaquinone biosynthesis; menaquinol from 1,4-dihydroxy-2-naphthoate: step 2/2. It participates in cofactor biosynthesis; ubiquinone biosynthesis. Its function is as follows. Methyltransferase required for the conversion of demethylmenaquinol (DMKH2) to menaquinol (MKH2) and the conversion of 2-polyprenyl-6-methoxy-1,4-benzoquinol (DDMQH2) to 2-polyprenyl-3-methyl-6-methoxy-1,4-benzoquinol (DMQH2). In Legionella pneumophila subsp. pneumophila (strain Philadelphia 1 / ATCC 33152 / DSM 7513), this protein is Ubiquinone/menaquinone biosynthesis C-methyltransferase UbiE.